Consider the following 433-residue polypeptide: MSTVPTDHGVAALGEFVFECGQSVPDLEVAYETHGEFDGDNVVLVCHALTGSQNVARSPAPERNEGTRGAGQAGQARAWWDDIVGPGKAIDTTKYYVVCANVPGSCYGTTGPASERPADLDLPEEPDHDRWGTAFPPVQVEDWARSQRRLLDHLGVGRLRAVVGGSVGGMNVLEWAKRYPDDVDRVVAIATAGRLDAQCLALDAVARRAIRADPNWNGGNYYGEGRPSPDEGLALARQIGHIMYLSKASMERKFGRRSAGRDSLTREEGDLGLPPEPTAAFFPYREVESYLDYQAEGFSERFDANSYLYLTRAMDEYDLSAGHGTDADALAAFEGEALLMSFTADWHFTVEQSSSLAAAFRDRDVPVAHHVIDSDHGHDAFLVEPEHVGPPLRDFLVEGVGGRAVSDDGGGGGNDSARPERDHAPVHASLFKG.

Residues 41–385 (NVVLVCHALT…HGHDAFLVEP (345 aa)) enclose the AB hydrolase-1 domain. A disordered region spans residues 55 to 74 (VARSPAPERNEGTRGAGQAG). The Nucleophile role is filled by Ser166. Arg237 is a binding site for substrate. Residues Asp345 and His378 contribute to the active site. Asp379 provides a ligand contact to substrate. A disordered region spans residues 403–433 (RAVSDDGGGGGNDSARPERDHAPVHASLFKG).

This sequence belongs to the AB hydrolase superfamily. MetX family. Homodimer.

The protein resides in the cytoplasm. The catalysed reaction is L-homoserine + acetyl-CoA = O-acetyl-L-homoserine + CoA. Its pathway is amino-acid biosynthesis; L-methionine biosynthesis via de novo pathway; O-acetyl-L-homoserine from L-homoserine: step 1/1. Its function is as follows. Transfers an acetyl group from acetyl-CoA to L-homoserine, forming acetyl-L-homoserine. The polypeptide is Homoserine O-acetyltransferase (Halorubrum lacusprofundi (strain ATCC 49239 / DSM 5036 / JCM 8891 / ACAM 34)).